The primary structure comprises 160 residues: Small ribosomal subunit protein bS6 (160 aa).

The protein belongs to the bacterial ribosomal protein bS6 family.

Binds together with bS18 to 16S ribosomal RNA. This chain is Small ribosomal subunit protein bS6, found in Ureaplasma urealyticum serovar 10 (strain ATCC 33699 / Western).